We begin with the raw amino-acid sequence, 546 residues long: Hexose transporter HXT10 (546 aa).

Residues M1–I44 lie on the Cytoplasmic side of the membrane. Residues A45 to W65 traverse the membrane as a helical segment. Residues D66–G100 lie on the Extracellular side of the membrane. N75 is a glycosylation site (N-linked (GlcNAc...) asparagine). The chain crosses the membrane as a helical span at residues L101–G121. Residues D122–K127 lie on the Cytoplasmic side of the membrane. The chain crosses the membrane as a helical span at residues I128 to S148. The Extracellular segment spans residues D149–R158. Residues I159–I179 form a helical membrane-spanning segment. The Cytoplasmic portion of the chain corresponds to S180–R185. A helical membrane pass occupies residues G186–T206. Residues N207–R220 are Extracellular-facing. The chain crosses the membrane as a helical span at residues V221–P241. Topologically, residues E242 to C324 are cytoplasmic. Residues N325 to Q341 form a helical membrane-spanning segment. The Extracellular portion of the chain corresponds to D342–S347. The helical transmembrane segment at I348 to V365 threads the bilayer. Over D366–K372 the chain is Cytoplasmic. Residues C373–V393 traverse the membrane as a helical segment. Over T394–V415 the chain is Extracellular. Residues F416–V436 form a helical membrane-spanning segment. Residues A437 to V453 are Cytoplasmic-facing. A helical transmembrane segment spans residues G454–I474. A topological domain (extracellular) is located at residue G475. Residues F476–F496 form a helical membrane-spanning segment. The Cytoplasmic portion of the chain corresponds to V497–K546.

The protein belongs to the major facilitator superfamily. Sugar transporter (TC 2.A.1.1) family.

The protein localises to the membrane. Its function is as follows. Probable glucose transporter. The polypeptide is Hexose transporter HXT10 (HXT10) (Saccharomyces cerevisiae (strain ATCC 204508 / S288c) (Baker's yeast)).